Consider the following 301-residue polypeptide: UDP-N-acetylenolpyruvoylglucosamine reductase 1 (301 aa).

One can recognise an FAD-binding PCMH-type domain in the interval K29–G196. Residue R174 is part of the active site. Catalysis depends on S225, which acts as the Proton donor. E295 is a catalytic residue.

It belongs to the MurB family. FAD is required as a cofactor.

The protein localises to the cytoplasm. The catalysed reaction is UDP-N-acetyl-alpha-D-muramate + NADP(+) = UDP-N-acetyl-3-O-(1-carboxyvinyl)-alpha-D-glucosamine + NADPH + H(+). The protein operates within cell wall biogenesis; peptidoglycan biosynthesis. Its function is as follows. Cell wall formation. The sequence is that of UDP-N-acetylenolpyruvoylglucosamine reductase 1 (murB1) from Bacillus cereus (strain ATCC 14579 / DSM 31 / CCUG 7414 / JCM 2152 / NBRC 15305 / NCIMB 9373 / NCTC 2599 / NRRL B-3711).